We begin with the raw amino-acid sequence, 395 residues long: Elongation factor Tu (395 aa).

One can recognise a tr-type G domain in the interval 10-204 (KEHANIGTIG…AVDDYIPTPE (195 aa)). The interval 19–26 (GHVDHGKT) is G1. 19–26 (GHVDHGKT) lines the GTP pocket. Thr26 serves as a coordination point for Mg(2+). The segment at 60–64 (GITIN) is G2. Positions 81–84 (DCPG) are G3. Residues 81–85 (DCPGH) and 136–139 (NKAD) contribute to the GTP site. A G4 region spans residues 136 to 139 (NKAD). Residues 174-176 (SAL) form a G5 region.

Belongs to the TRAFAC class translation factor GTPase superfamily. Classic translation factor GTPase family. EF-Tu/EF-1A subfamily. As to quaternary structure, monomer.

Its subcellular location is the cytoplasm. It catalyses the reaction GTP + H2O = GDP + phosphate + H(+). Functionally, GTP hydrolase that promotes the GTP-dependent binding of aminoacyl-tRNA to the A-site of ribosomes during protein biosynthesis. In Staphylococcus carnosus (strain TM300), this protein is Elongation factor Tu.